The primary structure comprises 88 residues: Yop proteins translocation protein S (88 aa).

2 helical membrane-spanning segments follow: residues 15–35 (WLVLVLSMPPVLVAAVVGTLV) and 49–69 (LGFVIKLIAVVVTLFATASWL).

It belongs to the FliQ/MopD/SpaQ family.

It is found in the cell membrane. Its function is as follows. Component of the Yop secretion machinery. The chain is Yop proteins translocation protein S (yscS) from Yersinia pestis.